Consider the following 88-residue polypeptide: Conotoxin VxVIB (88 aa).

An N-terminal signal peptide occupies residues 1-22; that stretch reads MNLACVLIVAVLFLTASQLATA. Positions 23–52 are excised as a propeptide; it reads ASYARDKQEYPAVRSSDEMQDSEDLTLTKE. 3 disulfides stabilise this stretch: Cys53-Cys68, Cys60-Cys72, and Cys67-Cys81.

As to expression, expressed by the venom duct.

It is found in the secreted. May act as a neurotoxin, but produces no obvious effect on ionic currents when tested on the mouse dorsal rooted ganglia (DRG). This Conus vexillum (Flag cone) protein is Conotoxin VxVIB.